The following is a 180-amino-acid chain: UPF0398 protein EF_1150 (180 aa).

The protein belongs to the UPF0398 family.

In Enterococcus faecalis (strain ATCC 700802 / V583), this protein is UPF0398 protein EF_1150.